A 119-amino-acid polypeptide reads, in one-letter code: Hisactophilin-3 (119 aa).

A lipid anchor (N-myristoyl glycine) is attached at Gly2. The contains several HHXH repeats stretch occupies residues 8 to 110 (SHHGHFLSAE…SIYTTHHHHH (103 aa)). 2 consecutive repeat copies span residues 34–47 (FHVE…VAIR) and 75–87 (FHLE…VSIK). The segment at 34-87 (FHVENHGHHKVAIRTHANKYVSINDNNDVYISHHFHGEHSLFHLEHHGGKVSIK) is 2 X 13 AA approximate repeats.

It belongs to the hisactophilin family. In terms of processing, phosphorylated.

Its subcellular location is the cytoplasm. It is found in the cell membrane. Its function is as follows. May act as an intracellular pH sensor that links chemotactic signals to responses in the microfilament system of the cells by nucleating actin polymerization or stabilizing the filaments. This chain is Hisactophilin-3 (hatC), found in Dictyostelium discoideum (Social amoeba).